The primary structure comprises 481 residues: G-protein coupled receptor 37-like 1 (481 aa).

A signal peptide spans 1-24 (MRWLWPLAVSLAVVLAVGPSEVSG). Topologically, residues 25–134 (AATLSLGGHR…ESSYSAYAVM (110 aa)) are extracellular. Disordered regions lie at residues 30 to 55 (LGGH…GPKE) and 76 to 107 (LQPT…TNLT). The span at 95-107 (TSESGQELRTNLT) shows a compositional bias: polar residues. Asn105 is a glycosylation site (N-linked (GlcNAc...) asparagine). A helical transmembrane segment spans residues 135 to 155 (LLALVVFAVGIVGNLSVMCIV). Topologically, residues 156-167 (WHSYYLKSAWNS) are cytoplasmic. A helical membrane pass occupies residues 168–188 (ILASLALWDFLVLFFCLPIVI). Topologically, residues 189 to 205 (FNEITKQRLLGDVSCRA) are extracellular. The cysteines at positions 203 and 286 are disulfide-linked. A helical membrane pass occupies residues 206–226 (VPFMEVSSLGVTTFSLCALGI). Over 227 to 251 (DRFHVATSTLPKVRPIERCQSILAK) the chain is Cytoplasmic. The chain crosses the membrane as a helical span at residues 252-272 (LAVIWVGSMMLAVPELLLWQL). Residues 273–310 (AQEPTPTMGTVDSCIMKPSADLPESLYSLVMTYQNARM) are Extracellular-facing. A helical transmembrane segment spans residues 311–331 (WWYFGCYFCLPILFTVTCQLV). Topologically, residues 332 to 360 (TWRVRGPPGRKPECRAGRHEQCESQLNST) are cytoplasmic. The chain crosses the membrane as a helical span at residues 361–381 (VVGLTVVYAFCTLPENICNIV). Over 382–398 (VAYLSTELTRQTLDLLG) the chain is Extracellular. A helical membrane pass occupies residues 399-419 (LINQFSTFFKGAITPVLLLCI). At 420 to 481 (CRPLGQAFLD…PPLLPLGTPC (62 aa)) the chain is on the cytoplasmic side. Ser471 bears the Phosphoserine mark. The residue at position 479 (Thr479) is a Phosphothreonine.

It belongs to the G-protein coupled receptor 1 family. In terms of assembly, interacts with the PTCH1 receptor. In terms of processing, undergoes metalloprotease-mediated cleavage which reduces its constitutive activity. Ubiquitinated. In terms of tissue distribution, highly expressed in brain.

Its subcellular location is the cell membrane. The protein resides in the cell projection. The protein localises to the cilium membrane. In terms of biological role, G-protein coupled receptor. Has been shown to bind the neuroprotective and glioprotective factor prosaposin (PSAP), leading to endocytosis followed by an ERK phosphorylation cascade. However, other studies have shown that prosaposin does not increase activity. It has been suggested that GPR37L1 is a constitutively active receptor which signals through the guanine nucleotide-binding protein G(s) subunit alpha. Participates in the regulation of postnatal cerebellar development by modulating the Shh pathway. Regulates baseline blood pressure in females and protects against cardiovascular stress in males. Mediates inhibition of astrocyte glutamate transporters and reduction in neuronal N-methyl-D-aspartate receptor activity. This chain is G-protein coupled receptor 37-like 1 (Gpr37l1), found in Rattus norvegicus (Rat).